The chain runs to 372 residues: 3-ketodihydrosphingosine reductase TSC10 (372 aa).

Residue V64 coordinates NADP(+). NADPH is bound by residues G67, S69, G71, R92, K96, D123, and L124. A GXSXG motif is present at residues 67–71 (GGSQG). Residue D123 coordinates NADP(+). S205 serves as the catalytic Proton donor. Residues Y219, K223, and S254 each contribute to the NADP(+) site. The Proton acceptor role is filled by Y219. The active-site Lowers pKa of active site Tyr is K223. Residues 321–341 (LLQIPLAIFMCIFSPVWNAFV) traverse the membrane as a helical segment.

It belongs to the short-chain dehydrogenases/reductases (SDR) family.

It localises to the endoplasmic reticulum membrane. It catalyses the reaction sphinganine + NADP(+) = 3-oxosphinganine + NADPH + H(+). The protein operates within lipid metabolism; sphingolipid metabolism. In terms of biological role, catalyzes the reduction of 3'-oxosphinganine (3-ketodihydrosphingosine/KDS) to sphinganine (dihydrosphingosine/DHS), the second step of de novo sphingolipid biosynthesis. This chain is 3-ketodihydrosphingosine reductase TSC10 (TSC10), found in Yarrowia lipolytica (strain CLIB 122 / E 150) (Yeast).